A 288-amino-acid polypeptide reads, in one-letter code: Bifunctional protein FolD 2 (288 aa).

NADP(+) is bound by residues G166–S168 and S191.

It belongs to the tetrahydrofolate dehydrogenase/cyclohydrolase family. Homodimer.

The enzyme catalyses (6R)-5,10-methylene-5,6,7,8-tetrahydrofolate + NADP(+) = (6R)-5,10-methenyltetrahydrofolate + NADPH. It catalyses the reaction (6R)-5,10-methenyltetrahydrofolate + H2O = (6R)-10-formyltetrahydrofolate + H(+). It participates in one-carbon metabolism; tetrahydrofolate interconversion. In terms of biological role, catalyzes the oxidation of 5,10-methylenetetrahydrofolate to 5,10-methenyltetrahydrofolate and then the hydrolysis of 5,10-methenyltetrahydrofolate to 10-formyltetrahydrofolate. In Myxococcus xanthus (strain DK1622), this protein is Bifunctional protein FolD 2.